Consider the following 194-residue polypeptide: Molybdenum cofactor guanylyltransferase (194 aa).

GTP-binding positions include 12–14 (LAG), lysine 25, asparagine 53, aspartate 70, and aspartate 100. Mg(2+) is bound at residue aspartate 100.

It belongs to the MobA family. In terms of assembly, monomer. The cofactor is Mg(2+).

The protein localises to the cytoplasm. It carries out the reaction Mo-molybdopterin + GTP + H(+) = Mo-molybdopterin guanine dinucleotide + diphosphate. Its function is as follows. Transfers a GMP moiety from GTP to Mo-molybdopterin (Mo-MPT) cofactor (Moco or molybdenum cofactor) to form Mo-molybdopterin guanine dinucleotide (Mo-MGD) cofactor. This Aliivibrio fischeri (strain ATCC 700601 / ES114) (Vibrio fischeri) protein is Molybdenum cofactor guanylyltransferase.